The chain runs to 718 residues: Probable trehalose-phosphatase (718 aa).

The segment at 449–470 is disordered; sequence LSMDQTGHKKVDAKKKPGIRKK. Over residues 459-470 the composition is skewed to basic residues; sequence VDAKKKPGIRKK.

In the N-terminal section; belongs to the glycosyltransferase 20 family. The protein in the C-terminal section; belongs to the trehalose phosphatase family.

The catalysed reaction is alpha,alpha-trehalose 6-phosphate + H2O = alpha,alpha-trehalose + phosphate. This chain is Probable trehalose-phosphatase, found in Encephalitozoon cuniculi (strain GB-M1) (Microsporidian parasite).